The primary structure comprises 282 residues: uncharacterized protein (282 aa).

The signal sequence occupies residues 1–18 (MIDLLVILVSLLFGVVWY).

It belongs to the IIV-6 213R family.

This is an uncharacterized protein from Aedes vexans (Inland floodwater mosquito).